The chain runs to 65 residues: Large ribosomal subunit protein uL30 (65 aa).

Belongs to the universal ribosomal protein uL30 family. As to quaternary structure, part of the 50S ribosomal subunit.

The sequence is that of Large ribosomal subunit protein uL30 from Rickettsia bellii (strain OSU 85-389).